Here is a 246-residue protein sequence, read N- to C-terminus: uncharacterized protein (246 aa).

6 consecutive transmembrane segments (helical) span residues 7-27 (KVTLVSLILMAVFQFFMALII), 50-70 (LNILLQALTIVIAATIVSMEF), 99-119 (VSFYLYLAYYILALLFGLLFF), 135-155 (LALIGSNWLEAVMMGLFGLLC), 163-183 (AVAVVVSFVVLYGASTLVQLM), and 219-239 (FSIGILIIHAIFFIVVGWWCF).

It is found in the cell membrane. This is an uncharacterized protein from Bacillus subtilis (strain 168).